Consider the following 142-residue polypeptide: MKTFVAKPHEVKRDWFVIDAKGKVLGRVASEVAHRLRGKHKPEFTPHVDTGDYIVIINAADIVVTGNKAQDKKYFRHTTYPGGIRETNFEKMQQRFPGRAIQKAVKGMLPKGPLGYAMIKKLKVYAGAEHPHTAQQPKPLEF.

It belongs to the universal ribosomal protein uL13 family. In terms of assembly, part of the 50S ribosomal subunit.

In terms of biological role, this protein is one of the early assembly proteins of the 50S ribosomal subunit, although it is not seen to bind rRNA by itself. It is important during the early stages of 50S assembly. In Bordetella bronchiseptica (strain ATCC BAA-588 / NCTC 13252 / RB50) (Alcaligenes bronchisepticus), this protein is Large ribosomal subunit protein uL13.